Reading from the N-terminus, the 488-residue chain is Proline--tRNA ligase (488 aa).

This sequence belongs to the class-II aminoacyl-tRNA synthetase family. ProS type 3 subfamily. Homodimer.

Its subcellular location is the cytoplasm. It catalyses the reaction tRNA(Pro) + L-proline + ATP = L-prolyl-tRNA(Pro) + AMP + diphosphate. Functionally, catalyzes the attachment of proline to tRNA(Pro) in a two-step reaction: proline is first activated by ATP to form Pro-AMP and then transferred to the acceptor end of tRNA(Pro). The sequence is that of Proline--tRNA ligase from Pyrobaculum arsenaticum (strain DSM 13514 / JCM 11321 / PZ6).